Here is a 229-residue protein sequence, read N- to C-terminus: ATP synthase subunit a (229 aa).

6 consecutive transmembrane segments (helical) span residues 25–45 (ADAI…SILA), 82–102 (FFPL…IGLI), 111–131 (NINT…IVGI), 142–162 (FLGP…IGHF), 181–201 (LVLM…MMLM), and 202–222 (GVLV…IYIQ).

This sequence belongs to the ATPase A chain family. In terms of assembly, F-type ATPases have 2 components, CF(1) - the catalytic core - and CF(0) - the membrane proton channel. CF(1) has five subunits: alpha(3), beta(3), gamma(1), delta(1), epsilon(1). CF(0) has three main subunits: a(1), b(2) and c(9-12). The alpha and beta chains form an alternating ring which encloses part of the gamma chain. CF(1) is attached to CF(0) by a central stalk formed by the gamma and epsilon chains, while a peripheral stalk is formed by the delta and b chains.

The protein resides in the cell inner membrane. In terms of biological role, key component of the proton channel; it plays a direct role in the translocation of protons across the membrane. This is ATP synthase subunit a from Geotalea daltonii (strain DSM 22248 / JCM 15807 / FRC-32) (Geobacter daltonii).